The primary structure comprises 1821 residues: MRPRTKARSPGRALRNPWRGFLPLTLALFVGAGHAQRDPVGRYEPAGGDANRLRRPGGSYPAAAAAKVYSLFREQDAPVAGLQPVERAQPGWGSPRRPTEAEARRPSRAQQSRRVQPPAQTRRSTPLGQQQPAPRTRAAPALPRLGTPQRSGAAPPTPPRGRLTGRNVCGGQCCPGWTTANSTNHCIKPVCEPPCQNRGSCSRPQLCVCRSGFRGARCEEVIPDEEFDPQNSRLAPRRWAERSPNLRRSSAAGEGTLARAQPPAPQSPPAPQSPPAGTLSGLSQTHPSQQHVGLSRTVRLHPTATASSQLSSNALPPGPGLEQRDGTQQAVPLEHPSSPWGLNLTEKIKKIKIVFTPTICKQTCARGHCANSCERGDTTTLYSQGGHGHDPKSGFRIYFCQIPCLNGGRCIGRDECWCPANSTGKFCHLPIPQPDREPPGRGSRPRALLEAPLKQSTFTLPLSNQLASVNPSLVKVHIHHPPEASVQIHQVAQVRGGVEEALVENSVETRPPPWLPASPGHSLWDSNNIPARSGEPPRPLPPAAPRPRGLLGRCYLNTVNGQCANPLLELTTQEDCCGSVGAFWGVTLCAPCPPRPASPVIENGQLECPQGYKRLNLTHCQDINECLTLGLCKDAECVNTRGSYLCTCRPGLMLDPSRSRCVSDKAISMLQGLCYRSLGPGTCTLPLAQRITKQICCCSRVGKAWGSECEKCPLPGTEAFREICPAGHGYTYASSDIRLSMRKAEEEELARPPREQGQRSSGALPGPAERQPLRVVTDTWLEAGTIPDKGDSQAGQVTTSVTHAPAWVTGNATTPPMPEQGIAEIQEEQVTPSTDVLVTLSTPGIDRCAAGATNVCGPGTCVNLPDGYRCVCSPGYQLHPSQAYCTDDNECLRDPCKGKGRCINRVGSYSCFCYPGYTLATSGATQECQDINECEQPGVCSGGQCTNTEGSYHCECDQGYIMVRKGHCQDINECRHPGTCPDGRCVNSPGSYTCLACEEGYRGQSGSCVDVNECLTPGVCAHGKCTNLEGSFRCSCEQGYEVTSDEKGCQDVDECASRASCPTGLCLNTEGSFACSACENGYWVNEDGTACEDLDECAFPGVCPSGVCTNTAGSFSCKDCDGGYRPSPLGDSCEDVDECEDPQSSCLGGECKNTVGSYQCLCPQGFQLANGTVCEDVNECMGEEHCAPHGECLNSHGSFFCLCAPGFVSAEGGTSCQDVDECATTDPCVGGHCVNTEGSFNCLCETGFQPSPESGECVDIDECEDYGDPVCGTWKCENSPGSYRCVLGCQPGFHMAPNGDCIDIDECANDTMCGSHGFCDNTDGSFRCLCDQGFEISPSGWDCVDVNECELMLAVCGAALCENVEGSFLCLCASDLEEYDAQEGHCRPRGAGGQSMSEAPTGDHAPAPTRMDCYSGQKGHAPCSSVLGRNTTQAECCCTQGASWGDACDLCPSEDSAEFSEICPSGKGYIPVEGAWTFGQTMYTDADECVIFGPGLCPNGRCLNTVPGYVCLCNPGFHYDASHKKCEDHDECQDLACENGECVNTEGSFHCFCSPPLTLDLSQQRCMNSTSSTEDLPDHDIHMDICWKKVTNDVCSEPLRGHRTTYTECCCQDGEAWSQQCALCPPRSSEVYAQLCNVARIEAEREAGVHFRPGYEYGPGPDDLHYSIYGPDGAPFYNYLGPEDTVPEPAFPNTAGHSADRTPILESPLQPSELQPHYVASHPEPPAGFEGLQAEECGILNGCENGRCVRVREGYTCDCFEGFQLDAAHMACVDVNECDDLNGPAVLCVHGYCENTEGSYRCHCSPGYVAEAGPPHCTAKE.

An N-terminal signal peptide occupies residues 1–35 (MRPRTKARSPGRALRNPWRGFLPLTLALFVGAGHA). Disordered regions lie at residues 38 to 58 (DPVG…RPGG) and 81 to 165 (GLQP…RLTG). The tract at residues 94–115 (SPRRPTEAEARRPSRAQQSRRV) is heparin-binding. 2 stretches are compositionally biased toward low complexity: residues 108–120 (RAQQ…PPAQ) and 129–145 (QQQP…LPRL). N-linked (GlcNAc...) asparagine glycosylation occurs at N181. In terms of domain architecture, EGF-like 1 spans 187 to 219 (IKPVCEPPCQNRGSCSRPQLCVCRSGFRGARCE). 3 disulfides stabilise this stretch: C191-C201, C195-C207, and C209-C218. The interval 229–339 (PQNSRLAPRR…AVPLEHPSSP (111 aa)) is disordered. Positions 232–249 (SRLAPRRWAERSPNLRRS) are heparin-binding. The span at 262–274 (PPAPQSPPAPQSP) shows a compositional bias: pro residues. Composition is skewed to polar residues over residues 280–292 (SGLS…QQHV) and 304–314 (ATASSQLSSNA). An N-linked (GlcNAc...) asparagine glycan is attached at N343. 344 to 354 (LTEKIKKIKIV) serves as a coordination point for heparin. The short motif at 375–377 (RGD) is the Cell attachment site element. The region spanning 396–428 (RIYFCQIPCLNGGRCIGRDECWCPANSTGKFCH) is the EGF-like 2 domain. Intrachain disulfides connect C400/C410, C404/C416, and C418/C427. An N-linked (GlcNAc...) asparagine glycan is attached at N421. Residue S506 is modified to Phosphoserine. The disordered stretch occupies residues 510–544 (RPPPWLPASPGHSLWDSNNIPARSGEPPRPLPPAA). Positions 552–604 (GRCYLNTVNGQCANPLLELTTQEDCCGSVGAFWGVTLCAPCPPRPASPVIENG) constitute a TB 1 domain. 3 disulfides stabilise this stretch: C554–C576, C563–C589, and C577–C592. N616 carries N-linked (GlcNAc...) asparagine glycosylation. The 41-residue stretch at 622 to 662 (DINECLTLGLCKDAECVNTRGSYLCTCRPGLMLDPSRSRCV) folds into the EGF-like 3; calcium-binding domain. Intrachain disulfides connect C626–C637, C632–C646, C648–C661, C674–C696, C683–C709, C697–C712, and C698–C724. The TB 2 domain occupies 672 to 724 (GLCYRSLGPGTCTLPLAQRITKQICCCSRVGKAWGSECEKCPLPGTEAFREIC). The span at 744 to 757 (AEEEELARPPREQG) shows a compositional bias: basic and acidic residues. Residues 744-772 (AEEEELARPPREQGQRSSGALPGPAERQP) form a disordered region. An N-linked (GlcNAc...) asparagine glycan is attached at N811. The EGF-like 4 domain maps to 844–886 (GIDRCAAGATNVCGPGTCVNLPDGYRCVCSPGYQLHPSQAYCT). 49 cysteine pairs are disulfide-bonded: C848-C861, C856-C870, C872-C885, C891-C902, C896-C911, C913-C928, C934-C945, C940-C954, C956-C968, C974-C985, C980-C994, C997-C1008, C1014-C1025, C1020-C1034, C1036-C1049, C1055-C1066, C1061-C1075, C1078-C1091, C1097-C1108, C1103-C1117, C1120-C1133, C1139-C1151, C1146-C1160, C1162-C1174, C1180-C1192, C1186-C1201, C1203-C1216, C1222-C1233, C1228-C1242, C1244-C1257, C1263-C1276, C1271-C1285, C1289-C1301, C1307-C1319, C1313-C1328, C1330-C1343, C1349-C1361, C1356-C1370, C1372-C1386, C1413-C1436, C1423-C1448, C1437-C1451, C1438-C1463, C1489-C1502, C1497-C1511, C1513-C1526, C1532-C1542, C1537-C1551, and C1553-C1566. Positions 887–929 (DDNECLRDPCKGKGRCINRVGSYSCFCYPGYTLATSGATQECQ) constitute an EGF-like 5; calcium-binding domain. The 40-residue stretch at 930–969 (DINECEQPGVCSGGQCTNTEGSYHCECDQGYIMVRKGHCQ) folds into the EGF-like 6; calcium-binding domain. Residues 970 to 1009 (DINECRHPGTCPDGRCVNSPGSYTCLACEEGYRGQSGSCV) enclose the EGF-like 7; calcium-binding domain. The EGF-like 8; calcium-binding domain maps to 1010 to 1050 (DVNECLTPGVCAHGKCTNLEGSFRCSCEQGYEVTSDEKGCQ). An EGF-like 9; calcium-binding domain is found at 1051–1092 (DVDECASRASCPTGLCLNTEGSFACSACENGYWVNEDGTACE). In terms of domain architecture, EGF-like 10; calcium-binding spans 1093-1134 (DLDECAFPGVCPSGVCTNTAGSFSCKDCDGGYRPSPLGDSCE). Positions 1135–1175 (DVDECEDPQSSCLGGECKNTVGSYQCLCPQGFQLANGTVCE) constitute an EGF-like 11; calcium-binding domain. N1170 carries N-linked (GlcNAc...) asparagine glycosylation. The 42-residue stretch at 1176–1217 (DVNECMGEEHCAPHGECLNSHGSFFCLCAPGFVSAEGGTSCQ) folds into the EGF-like 12; calcium-binding domain. An EGF-like 13; calcium-binding domain is found at 1218–1258 (DVDECATTDPCVGGHCVNTEGSFNCLCETGFQPSPESGECV). The EGF-like 14; calcium-binding domain maps to 1259-1302 (DIDECEDYGDPVCGTWKCENSPGSYRCVLGCQPGFHMAPNGDCI). One can recognise an EGF-like 15; calcium-binding domain in the interval 1303–1344 (DIDECANDTMCGSHGFCDNTDGSFRCLCDQGFEISPSGWDCV). N-linked (GlcNAc...) asparagine glycosylation occurs at N1309. Residues 1345–1387 (DVNECELMLAVCGAALCENVEGSFLCLCASDLEEYDAQEGHCR) enclose the EGF-like 16; calcium-binding domain. The TB 3 domain occupies 1411-1463 (MDCYSGQKGHAPCSSVLGRNTTQAECCCTQGASWGDACDLCPSEDSAEFSEIC). N-linked (GlcNAc...) asparagine glycosylation occurs at N1430. The 43-residue stretch at 1485 to 1527 (DADECVIFGPGLCPNGRCLNTVPGYVCLCNPGFHYDASHKKCE) folds into the EGF-like 17; calcium-binding domain. An EGF-like 18; calcium-binding domain is found at 1528 to 1567 (DHDECQDLACENGECVNTEGSFHCFCSPPLTLDLSQQRCM). N1568 carries N-linked (GlcNAc...) asparagine glycosylation. One can recognise a TB 4 domain in the interval 1584–1636 (DICWKKVTNDVCSEPLRGHRTTYTECCCQDGEAWSQQCALCPPRSSEVYAQLC). 10 disulfide bridges follow: C1586/C1609, C1595/C1621, C1610/C1624, C1611/C1636, C1737/C1748, C1743/C1757, C1759/C1772, C1778/C1793, C1788/C1802, and C1804/C1817. Residues 1639 to 1821 (ARIEAEREAG…AGPPHCTAKE (183 aa)) form a C-terminal domain region. One can recognise an EGF-like 19; calcium-binding domain in the interval 1733–1773 (QAEECGILNGCENGRCVRVREGYTCDCFEGFQLDAAHMACV). Residues 1774–1818 (DVNECDDLNGPAVLCVHGYCENTEGSYRCHCSPGYVAEAGPPHCT) form the EGF-like 20; calcium-binding domain.

Belongs to the LTBP family. As to quaternary structure, forms part of the large latent transforming growth factor beta precursor complex; removal is essential for activation of complex. Interacts with SDC4. Interacts (via C-terminal domain) with FBN1 (via N-terminal domain) in a Ca(+2)-dependent manner. Post-translationally, N-Glycosylated. Contains hydroxylated asparagine residues. In terms of tissue distribution, expressed in the aorta (at protein level). Expressed in lung, weakly expressed in heart, placenta, liver and skeletal muscle.

The protein resides in the secreted. Its subcellular location is the extracellular space. It is found in the extracellular matrix. May play an integral structural role in elastic-fiber architectural organization and/or assembly. This is Latent-transforming growth factor beta-binding protein 2 (LTBP2) from Homo sapiens (Human).